The sequence spans 32 residues: Photosystem II reaction center protein Z (32 aa).

A helical membrane pass occupies residues 9 to 31 (FILIGSASWAALVLLVGSLNSFV).

It belongs to the PsbZ family. In terms of assembly, PSII is composed of 1 copy each of membrane proteins PsbA, PsbB, PsbC, PsbD, PsbE, PsbF, PsbH, PsbI, PsbJ, PsbK, PsbL, PsbM, PsbT, PsbY, PsbZ, Psb30/Ycf12, at least 3 peripheral proteins of the oxygen-evolving complex and a large number of cofactors. It forms dimeric complexes.

It localises to the plastid. The protein resides in the chloroplast thylakoid membrane. May control the interaction of photosystem II (PSII) cores with the light-harvesting antenna, regulates electron flow through the 2 photosystem reaction centers. PSII is a light-driven water plastoquinone oxidoreductase, using light energy to abstract electrons from H(2)O, generating a proton gradient subsequently used for ATP formation. The sequence is that of Photosystem II reaction center protein Z from Euglena viridis (Cercaria viridis).